The primary structure comprises 119 residues: MNLKQVGRFGENLAVDFLIKHGYEILRTNFRCRLGEIDIIAKEDKTIVFVEVKTRKSLKFGLPSESVNFKKQLHIKKVAEYFIAYHLSQDKYLYRFDVVEIFIDGKNNVTKINLIKDAF.

The protein belongs to the UPF0102 family.

The protein is UPF0102 protein Athe_0977 of Caldicellulosiruptor bescii (strain ATCC BAA-1888 / DSM 6725 / KCTC 15123 / Z-1320) (Anaerocellum thermophilum).